Here is a 344-residue protein sequence, read N- to C-terminus: ATPase GET3 (344 aa).

26–33 (KGGVGKTT) contributes to the ATP binding site. Asp-57 is a catalytic residue. ATP contacts are provided by Glu-239 and Asn-266. Residues Cys-276 and Cys-279 each coordinate Zn(2+).

It belongs to the arsA ATPase family. In terms of assembly, homodimer. Component of the Golgi to ER traffic (GET) complex, which is composed of GET1, GET2 and GET3. Within the complex, GET1 and GET2 form a heterotetramer which is stabilized by phosphatidylinositol binding and which binds to the GET3 homodimer. Interacts with the chloride channel protein GEF1.

The protein resides in the cytoplasm. Its subcellular location is the endoplasmic reticulum. It is found in the golgi apparatus. Functionally, ATPase required for the post-translational delivery of tail-anchored (TA) proteins to the endoplasmic reticulum. Recognizes and selectively binds the transmembrane domain of TA proteins in the cytosol. This complex then targets to the endoplasmic reticulum by membrane-bound receptors GET1 and GET2, where the tail-anchored protein is released for insertion. This process is regulated by ATP binding and hydrolysis. ATP binding drives the homodimer towards the closed dimer state, facilitating recognition of newly synthesized TA membrane proteins. ATP hydrolysis is required for insertion. Subsequently, the homodimer reverts towards the open dimer state, lowering its affinity for the GET1-GET2 receptor, and returning it to the cytosol to initiate a new round of targeting. Cooperates with the HDEL receptor ERD2 to mediate the ATP-dependent retrieval of resident ER proteins that contain a C-terminal H-D-E-L retention signal from the Golgi to the ER. Involved in low-level resistance to the oxyanions arsenite and arsenate, and in heat tolerance. The polypeptide is ATPase GET3 (Komagataella phaffii (strain GS115 / ATCC 20864) (Yeast)).